Reading from the N-terminus, the 465-residue chain is Cysteine--tRNA ligase (465 aa).

Cys-30 is a Zn(2+) binding site. The short motif at 32–42 (ITVYDYCHVGH) is the 'HIGH' region element. 3 residues coordinate Zn(2+): Cys-214, His-239, and Glu-243. A 'KMSKS' region motif is present at residues 271 to 275 (KMSKS). Lys-274 contributes to the ATP binding site.

The protein belongs to the class-I aminoacyl-tRNA synthetase family. Monomer. Zn(2+) is required as a cofactor.

It localises to the cytoplasm. It catalyses the reaction tRNA(Cys) + L-cysteine + ATP = L-cysteinyl-tRNA(Cys) + AMP + diphosphate. This is Cysteine--tRNA ligase from Burkholderia multivorans (strain ATCC 17616 / 249).